The chain runs to 201 residues: NAD(P)H-dependent FMN reductase ntnL (201 aa).

FMN is bound by residues Arg-12, 90 to 93, and Tyr-120; that span reads EYNG.

In terms of assembly, homodimer.

The enzyme catalyses FMNH2 + NADP(+) = FMN + NADPH + 2 H(+). It catalyses the reaction FMNH2 + NAD(+) = FMN + NADH + 2 H(+). It participates in secondary metabolite biosynthesis; terpenoid biosynthesis. Functionally, NAD(P)H-dependent FMN reductase; part of the gene cluster that mediates the biosynthesis of the meroterpenoids nectripenoids A and B, as well as cochliquninone D and isocochliquninone E. The pathway probably begins with the HR-PKS ntnH that catalyzes two chain-extension steps to form a reduced triketide, which then primes the SAT domain in the NR-PKS ntnG to initiate three more cycles of extension to give a linear hexaketide corresponding to the polyketide part of nectripenoids. The FAD-dependent monooxygenase ntnJ then performs an oxidative decarboxylation at C11 of the ntnH/ntnG product, via an electrophilic aromatic hydroxylation with concomitant ipso-decarboxylation. The membrane-bound polyprenyl transferase ntnF then introduces a farnesyl group before the FAD-dependent monooxygenase ntnK functions as the first epoxidase on terminal C12'-C13' olefin, followed by a second epoxidation on C7'-C8' catalyzed by ntnA. The terpene cyclase/mutase ntnI then initiates the sequential tricyclic ring formation through protonation of the terminal epoxide and catalyzes the regioselective and stereoselective 6/6/6-tricyclic ring formation. The cytochrome P450 monooxygenase ntnM may then hydroxylate C1'. This is NAD(P)H-dependent FMN reductase ntnL from Nectria sp.